The sequence spans 372 residues: Heat-inducible transcription repressor HrcA (372 aa).

The protein belongs to the HrcA family.

Negative regulator of class I heat shock genes (grpE-dnaK-dnaJ and groELS operons). Prevents heat-shock induction of these operons. The chain is Heat-inducible transcription repressor HrcA from Chloroflexus aurantiacus (strain ATCC 29366 / DSM 635 / J-10-fl).